A 377-amino-acid chain; its full sequence is Probable pectin lyase D (377 aa).

Positions 1 to 17 (MRVSAFALLAAAATAAA) are cleaved as a signal peptide. 2 cysteine pairs are disulfide-bonded: Cys-80/Cys-99 and Cys-89/Cys-223. Asn-126 is a glycosylation site (N-linked (GlcNAc...) asparagine). Arg-253 is an active-site residue. Cys-321 and Cys-329 are disulfide-bonded.

It belongs to the polysaccharide lyase 1 family.

It localises to the secreted. It catalyses the reaction Eliminative cleavage of (1-&gt;4)-alpha-D-galacturonan methyl ester to give oligosaccharides with 4-deoxy-6-O-methyl-alpha-D-galact-4-enuronosyl groups at their non-reducing ends.. Functionally, pectinolytic enzymes consist of four classes of enzymes: pectin lyase, polygalacturonase, pectin methylesterase and rhamnogalacturonase. Among pectinolytic enzymes, pectin lyase is the most important in depolymerization of pectin, since it cleaves internal glycosidic bonds of highly methylated pectins. The sequence is that of Probable pectin lyase D (pelD) from Emericella nidulans (strain FGSC A4 / ATCC 38163 / CBS 112.46 / NRRL 194 / M139) (Aspergillus nidulans).